Consider the following 73-residue polypeptide: Large ribosomal subunit protein uL30 (73 aa).

It belongs to the universal ribosomal protein uL30 family. In terms of assembly, part of the 50S ribosomal subunit.

The protein is Large ribosomal subunit protein uL30 of Borrelia hermsii (strain HS1 / DAH).